We begin with the raw amino-acid sequence, 156 residues long: Small ribosomal subunit protein uS7 (156 aa).

It belongs to the universal ribosomal protein uS7 family. In terms of assembly, part of the 30S ribosomal subunit. Contacts proteins S9 and S11.

Functionally, one of the primary rRNA binding proteins, it binds directly to 16S rRNA where it nucleates assembly of the head domain of the 30S subunit. Is located at the subunit interface close to the decoding center, probably blocks exit of the E-site tRNA. This is Small ribosomal subunit protein uS7 from Acinetobacter baumannii (strain AB307-0294).